Here is a 213-residue protein sequence, read N- to C-terminus: Outer-membrane lipoprotein LolB (213 aa).

Residues 1–24 (MNNLSYFTKTKLVWVILSLSLLSA) form the signal peptide. The N-palmitoyl cysteine moiety is linked to residue C25. C25 carries the S-diacylglycerol cysteine lipid modification.

This sequence belongs to the LolB family. In terms of assembly, monomer.

It localises to the cell outer membrane. Plays a critical role in the incorporation of lipoproteins in the outer membrane after they are released by the LolA protein. This chain is Outer-membrane lipoprotein LolB, found in Shewanella woodyi (strain ATCC 51908 / MS32).